Reading from the N-terminus, the 181-residue chain is ATP-dependent protease subunit HslV (181 aa).

Threonine 6 is a catalytic residue. Residues glycine 162, cysteine 165, and threonine 168 each coordinate Na(+).

It belongs to the peptidase T1B family. HslV subfamily. In terms of assembly, a double ring-shaped homohexamer of HslV is capped on each side by a ring-shaped HslU homohexamer. The assembly of the HslU/HslV complex is dependent on binding of ATP.

It is found in the cytoplasm. The catalysed reaction is ATP-dependent cleavage of peptide bonds with broad specificity.. Its activity is regulated as follows. Allosterically activated by HslU binding. Functionally, protease subunit of a proteasome-like degradation complex believed to be a general protein degrading machinery. The chain is ATP-dependent protease subunit HslV from Nitratidesulfovibrio vulgaris (strain ATCC 29579 / DSM 644 / CCUG 34227 / NCIMB 8303 / VKM B-1760 / Hildenborough) (Desulfovibrio vulgaris).